The following is a 151-amino-acid chain: Ribonuclease H (151 aa).

Residues 1-141 (MKNVIIYTDG…ADALANRGID (141 aa)) form the RNase H type-1 domain. Residues aspartate 9, glutamate 47, aspartate 69, and aspartate 133 each contribute to the Mg(2+) site.

It belongs to the RNase H family. As to quaternary structure, monomer. Mg(2+) serves as cofactor.

It is found in the cytoplasm. The catalysed reaction is Endonucleolytic cleavage to 5'-phosphomonoester.. In terms of biological role, endonuclease that specifically degrades the RNA of RNA-DNA hybrids. This chain is Ribonuclease H, found in Alcanivorax borkumensis (strain ATCC 700651 / DSM 11573 / NCIMB 13689 / SK2).